The chain runs to 110 residues: ATP-dependent Clp protease adapter protein ClpS (110 aa).

Residues 1–10 (MSDDRRRGDE) show a composition bias toward basic and acidic residues. Residues 1–27 (MSDDRRRGDEDGGAGTGVITKTKPKTK) are disordered.

The protein belongs to the ClpS family. Binds to the N-terminal domain of the chaperone ClpA.

In terms of biological role, involved in the modulation of the specificity of the ClpAP-mediated ATP-dependent protein degradation. In Parvibaculum lavamentivorans (strain DS-1 / DSM 13023 / NCIMB 13966), this protein is ATP-dependent Clp protease adapter protein ClpS.